Reading from the N-terminus, the 107-residue chain is Biphenyl 2,3-dioxygenase, ferredoxin component (107 aa).

A Rieske domain is found at 4 to 99 (TKICSSGDLA…VKLEGDDVLV (96 aa)). [2Fe-2S] cluster is bound by residues Cys43, His45, Cys62, and His65.

This sequence belongs to the bacterial ring-hydroxylating dioxygenase ferredoxin component family. In terms of assembly, the multicomponent biphenyl dioxygenase system is composed of a ferredoxin reductase (BphA4), a ferredoxin (BphA3), and a terminal oxygenase (BphA1A2). Requires [2Fe-2S] cluster as cofactor.

It functions in the pathway xenobiotic degradation; biphenyl degradation. In terms of biological role, ferredoxin component of the biphenyl dioxygenase system that catalyzes the stereospecific dihydroxylation of the aromatic ring of biphenyl, yielding a dihydrodiol compound. Is likely involved in biphenyl degradation that allows growth of Rhodococcus sp. strain RHA1 on biphenyl as the sole source of carbon and energy. The dioxygenase system can also use naphtalene and 4-chlorobiphenyl (4-CB) as substrates, as well as some polychlorinated biphenyls (PCB) such as 2,2'-dichlorobiphenyl, 2,3-dichlorobiphenyl and 2,5,2'-trichlorobiphenyl. It exhibits weak activity toward dibenzofuran and dibenzo-p-dioxin. Electrons are transferred from NADH to the [2Fe-2S] cluster in BphA1 via FAD of BphA4 and [2Fe-2S] cluster of BphA3. The protein is Biphenyl 2,3-dioxygenase, ferredoxin component of Rhodococcus jostii (strain RHA1).